We begin with the raw amino-acid sequence, 448 residues long: UPF0053 protein sll0260 (448 aa).

Residues 2–203 (FSSSVELELF…AQAGMIDEAE (202 aa)) enclose the CNNM transmembrane domain. 4 consecutive transmembrane segments (helical) span residues 11–31 (FFIF…IAIV), 62–82 (FLSA…AVGG), 106–126 (LSIS…GELV), and 142–162 (VAPA…LLGV). 2 consecutive CBS domains span residues 222–281 (MTPR…GQKI) and 286–345 (IVQP…NDDE).

Belongs to the UPF0053 family.

The protein localises to the cell membrane. This chain is UPF0053 protein sll0260, found in Synechocystis sp. (strain ATCC 27184 / PCC 6803 / Kazusa).